The following is a 595-amino-acid chain: Probable xyloglucan glycosyltransferase 9 (595 aa).

Helical transmembrane passes span 30 to 50 and 77 to 97; these read AFVVLSVLLLIVELGAYINGW and ATYVAPFIQFLTDACVVLFLI. Aspartate 177 is an active-site residue. Residues aspartate 236 and aspartate 238 each contribute to the substrate site. Aspartate 330 is an active-site residue. A run of 4 helical transmembrane segments spans residues 408–428, 433–453, 545–564, and 570–590; these read LILPFYSFTLFCIILPMTMFV, LPDWVVCYIPALMSLLNILPS, IYKKELALSLLLLTAAARSL, and IHFYFLLFQGISFLLVGLDLI.

Belongs to the glycosyltransferase 2 family. Plant cellulose synthase-like C subfamily.

It is found in the golgi apparatus membrane. Its function is as follows. Probable beta-1,4-glucan synthase rather involved in the synthesis of the xyloglucan backbone than cellulose. Seems to work simultaneously with xyloglucan 6-xylosyltransferase. Xyloglucan is a noncellulosic polysaccharides of plant cell wall and consists of a glucan backbone substituted by xylose, galactose and fucose. The polypeptide is Probable xyloglucan glycosyltransferase 9 (CSLC9) (Oryza sativa subsp. japonica (Rice)).